The chain runs to 175 residues: Crossover junction endodeoxyribonuclease RuvC (175 aa).

Residues Asp-16, Glu-76, and Asp-148 contribute to the active site. Positions 16, 76, and 148 each coordinate Mg(2+).

The protein belongs to the RuvC family. As to quaternary structure, homodimer which binds Holliday junction (HJ) DNA. The HJ becomes 2-fold symmetrical on binding to RuvC with unstacked arms; it has a different conformation from HJ DNA in complex with RuvA. In the full resolvosome a probable DNA-RuvA(4)-RuvB(12)-RuvC(2) complex forms which resolves the HJ. Mg(2+) serves as cofactor.

The protein localises to the cytoplasm. The enzyme catalyses Endonucleolytic cleavage at a junction such as a reciprocal single-stranded crossover between two homologous DNA duplexes (Holliday junction).. Its function is as follows. The RuvA-RuvB-RuvC complex processes Holliday junction (HJ) DNA during genetic recombination and DNA repair. Endonuclease that resolves HJ intermediates. Cleaves cruciform DNA by making single-stranded nicks across the HJ at symmetrical positions within the homologous arms, yielding a 5'-phosphate and a 3'-hydroxyl group; requires a central core of homology in the junction. The consensus cleavage sequence is 5'-(A/T)TT(C/G)-3'. Cleavage occurs on the 3'-side of the TT dinucleotide at the point of strand exchange. HJ branch migration catalyzed by RuvA-RuvB allows RuvC to scan DNA until it finds its consensus sequence, where it cleaves and resolves the cruciform DNA. This is Crossover junction endodeoxyribonuclease RuvC from Bradyrhizobium diazoefficiens (strain JCM 10833 / BCRC 13528 / IAM 13628 / NBRC 14792 / USDA 110).